Here is a 234-residue protein sequence, read N- to C-terminus: Interleukin-34 (234 aa).

An N-terminal signal peptide occupies residues 1-20 (MPWGLAWLYCLGILLDVALG). A glycan (N-linked (GlcNAc...) asparagine) is linked at N99. A disordered region spans residues 215–234 (PRQPPTSLPRSPSSNHGPLP). Positions 222–234 (LPRSPSSNHGPLP) are enriched in polar residues.

Belongs to the IL-34 family. As to quaternary structure, homodimer. Interacts with CSF1R.

The protein resides in the secreted. Cytokine that promotes the proliferation, survival and differentiation of monocytes and macrophages. Promotes the release of pro-inflammatory chemokines, and thereby plays an important role in innate immunity and in inflammatory processes. Plays an important role in the regulation of osteoclast proliferation and differentiation, and in the regulation of bone resorption. Signaling via CSF1R and its downstream effectors stimulates phosphorylation of MAPK1/ERK2 AND MAPK3/ERK1. The sequence is that of Interleukin-34 (Il34) from Rattus norvegicus (Rat).